Reading from the N-terminus, the 371-residue chain is DNA replication and repair protein RecF (371 aa).

An ATP-binding site is contributed by 30 to 37; sequence GENAQGKT.

The protein belongs to the RecF family.

It is found in the cytoplasm. The RecF protein is involved in DNA metabolism; it is required for DNA replication and normal SOS inducibility. RecF binds preferentially to single-stranded, linear DNA. It also seems to bind ATP. This is DNA replication and repair protein RecF from Staphylococcus haemolyticus (strain JCSC1435).